Reading from the N-terminus, the 569-residue chain is Proline--tRNA ligase (569 aa).

It belongs to the class-II aminoacyl-tRNA synthetase family. ProS type 1 subfamily. Homodimer.

The protein localises to the cytoplasm. The catalysed reaction is tRNA(Pro) + L-proline + ATP = L-prolyl-tRNA(Pro) + AMP + diphosphate. Functionally, catalyzes the attachment of proline to tRNA(Pro) in a two-step reaction: proline is first activated by ATP to form Pro-AMP and then transferred to the acceptor end of tRNA(Pro). As ProRS can inadvertently accommodate and process non-cognate amino acids such as alanine and cysteine, to avoid such errors it has two additional distinct editing activities against alanine. One activity is designated as 'pretransfer' editing and involves the tRNA(Pro)-independent hydrolysis of activated Ala-AMP. The other activity is designated 'posttransfer' editing and involves deacylation of mischarged Ala-tRNA(Pro). The misacylated Cys-tRNA(Pro) is not edited by ProRS. The chain is Proline--tRNA ligase from Shewanella loihica (strain ATCC BAA-1088 / PV-4).